The sequence spans 517 residues: T-box transcription factor TBX22 (517 aa).

Positions 1–83 are disordered; the sequence is MALSSRAHAF…SDESNSQESL (83 aa). Residues 35–45 show a composition bias toward acidic residues; the sequence is LQEEQFVEEGE. Over residues 46–66 the composition is skewed to basic and acidic residues; it reads EILRSPSRDSQQPEKRLKAES. Residues 74–83 show a composition bias toward low complexity; sequence SDESNSQESL. Positions 93 to 280 form a DNA-binding region, T-box; the sequence is LQGSDLWKRF…RNPFAKGFRD (188 aa). Residues 312 to 333 are disordered; that stretch reads TQSGSSGSSPVTSSGGAPSPLN. Positions 314–333 are enriched in low complexity; that stretch reads SGSSGSSPVTSSGGAPSPLN.

Its subcellular location is the nucleus. Probable transcriptional regulator involved in developmental processes. This is major determinant crucial to palatogenesis. This chain is T-box transcription factor TBX22 (Tbx22), found in Mus musculus (Mouse).